The sequence spans 161 residues: Globin CTT-VIIB-8 (161 aa).

Positions methionine 1–alanine 16 are cleaved as a signal peptide. A Globin domain is found at proline 18–leucine 161. Residues histidine 76 and histidine 111 each coordinate heme b.

The protein belongs to the globin family. Homodimer.

The polypeptide is Globin CTT-VIIB-8 (CTT-7B8) (Chironomus thummi thummi (Midge)).